We begin with the raw amino-acid sequence, 423 residues long: Growth hormone-releasing hormone receptor (423 aa).

Residues Met1–Gly22 form the signal peptide. Over His23 to Arg130 the chain is Extracellular. 3 cysteine pairs are disulfide-bonded: Cys41–Cys64, Cys55–Cys96, and Cys78–Cys112. A glycan (N-linked (GlcNAc...) asparagine) is linked at Asn50. The helical transmembrane segment at Ile131–Leu151 threads the bilayer. The Cytoplasmic portion of the chain corresponds to Val152–Gln167. A helical membrane pass occupies residues Leu168–His188. At Ser189–His210 the chain is on the extracellular side. A helical membrane pass occupies residues Phe211 to Leu231. Topologically, residues Ala232–Arg240 are cytoplasmic. Residues Ala241–Val261 form a helical membrane-spanning segment. The Extracellular portion of the chain corresponds to Gly262 to Trp283. Residues Ile284 to Ile304 traverse the membrane as a helical segment. The Cytoplasmic segment spans residues Arg305–Thr331. The chain crosses the membrane as a helical span at residues Leu332–Ala352. At Gly353–Arg357 the chain is on the extracellular side. A helical membrane pass occupies residues Leu358–Phe378. At Leu379 to Cys423 the chain is on the cytoplasmic side.

It belongs to the G-protein coupled receptor 2 family. Pituitary gland. Also detected in the lymphocytes and thymocytes.

It is found in the cell membrane. Receptor for GRF, coupled to G proteins which activate adenylyl cyclase. Stimulates somatotroph cell growth, growth hormone gene transcription and growth hormone secretion. This is Growth hormone-releasing hormone receptor (GHRHR) from Sus scrofa (Pig).